We begin with the raw amino-acid sequence, 355 residues long: NADH-quinone oxidoreductase subunit H (355 aa).

The next 8 membrane-spanning stretches (helical) occupy residues 25–45, 91–111, 126–146, 170–190, 205–225, 253–273, 290–310, and 330–350; these read VVRI…LILW, WLYL…WAVI, LLYA…AGWA, MGFA…SEIV, FLSW…ISGI, MAFA…SALA, FIPG…VFIW, and VFLP…MSPL.

Belongs to the complex I subunit 1 family. As to quaternary structure, NDH-1 is composed of 14 different subunits. Subunits NuoA, H, J, K, L, M, N constitute the membrane sector of the complex.

The protein localises to the cell inner membrane. It catalyses the reaction a quinone + NADH + 5 H(+)(in) = a quinol + NAD(+) + 4 H(+)(out). In terms of biological role, NDH-1 shuttles electrons from NADH, via FMN and iron-sulfur (Fe-S) centers, to quinones in the respiratory chain. The immediate electron acceptor for the enzyme in this species is believed to be ubiquinone. Couples the redox reaction to proton translocation (for every two electrons transferred, four hydrogen ions are translocated across the cytoplasmic membrane), and thus conserves the redox energy in a proton gradient. This subunit may bind ubiquinone. In Burkholderia cenocepacia (strain ATCC BAA-245 / DSM 16553 / LMG 16656 / NCTC 13227 / J2315 / CF5610) (Burkholderia cepacia (strain J2315)), this protein is NADH-quinone oxidoreductase subunit H.